The chain runs to 897 residues: Leucine--tRNA ligase (897 aa).

The 'HIGH' region signature appears at 49-59; sequence PYPSGKLHMGH. Positions 654-658 match the 'KMSKS' region motif; the sequence is KMSKS. Lysine 657 serves as a coordination point for ATP.

This sequence belongs to the class-I aminoacyl-tRNA synthetase family.

Its subcellular location is the cytoplasm. The catalysed reaction is tRNA(Leu) + L-leucine + ATP = L-leucyl-tRNA(Leu) + AMP + diphosphate. The protein is Leucine--tRNA ligase of Methylibium petroleiphilum (strain ATCC BAA-1232 / LMG 22953 / PM1).